Here is a 413-residue protein sequence, read N- to C-terminus: CinA-like protein (413 aa).

It belongs to the CinA family.

In Geobacter metallireducens (strain ATCC 53774 / DSM 7210 / GS-15), this protein is CinA-like protein.